The chain runs to 598 residues: Urease subunit alpha (598 aa).

The Ni(2+) site is built by H141, H143, and K223. K223 carries the N6-carboxylysine modification. Substrate is bound at residue H225. Ni(2+) is bound by residues H252 and H278. The active-site Proton donor is H326. D366 contacts Ni(2+).

Belongs to the metallo-dependent hydrolases superfamily. Urease alpha subunit family. Heterotrimer of UreA (gamma), UreB (beta) and UreC (alpha) subunits. Three heterotrimers associate to form the active enzyme. Ni cation is required as a cofactor. Carboxylation allows a single lysine to coordinate two nickel ions.

Its subcellular location is the cytoplasm. It catalyses the reaction urea + 2 H2O + H(+) = hydrogencarbonate + 2 NH4(+). It participates in nitrogen metabolism; urea degradation; CO(2) and NH(3) from urea (urease route): step 1/1. This Ureaplasma parvum serovar 3 (strain ATCC 27815 / 27 / NCTC 11736) protein is Urease subunit alpha.